The sequence spans 170 residues: ATP synthase subunit b (170 aa).

A helical membrane pass occupies residues 4–24; it reads ILLLGLALAPVALFASQGAVE.

Belongs to the ATPase B chain family. F-type ATPases have 2 components, F(1) - the catalytic core - and F(0) - the membrane proton channel. F(1) has five subunits: alpha(3), beta(3), gamma(1), delta(1), epsilon(1). F(0) has three main subunits: a(1), b(2) and c(10-14). The alpha and beta chains form an alternating ring which encloses part of the gamma chain. F(1) is attached to F(0) by a central stalk formed by the gamma and epsilon chains, while a peripheral stalk is formed by the delta and b chains.

Its subcellular location is the cell inner membrane. In terms of biological role, f(1)F(0) ATP synthase produces ATP from ADP in the presence of a proton or sodium gradient. F-type ATPases consist of two structural domains, F(1) containing the extramembraneous catalytic core and F(0) containing the membrane proton channel, linked together by a central stalk and a peripheral stalk. During catalysis, ATP synthesis in the catalytic domain of F(1) is coupled via a rotary mechanism of the central stalk subunits to proton translocation. Component of the F(0) channel, it forms part of the peripheral stalk, linking F(1) to F(0). This Aliarcobacter butzleri (strain RM4018) (Arcobacter butzleri) protein is ATP synthase subunit b.